A 364-amino-acid chain; its full sequence is Doublecortin domain-containing protein 2C (364 aa).

Doublecortin domains lie at 16 to 98 and 136 to 217; these read KTIV…LDYI and RHIN…FPYW. The disordered stretch occupies residues 233 to 255; it reads VEKNSQRKKKVDSKGKEPCKYDG.

In terms of tissue distribution, expressed in testis and spermatozoa (at protein level).

The protein localises to the cell projection. It localises to the cilium. The protein resides in the flagellum. It is found in the cytoplasm. This Homo sapiens (Human) protein is Doublecortin domain-containing protein 2C.